An 829-amino-acid chain; its full sequence is Isethionate sulfite-lyase (829 aa).

Residues 31–699 enclose the PFL domain; it reads ERVFNILDSF…VVSATPNGRL (669 aa). Residues Arg-188, Gln-192, 467–469, and Arg-677 contribute to the 2-hydroxyethane-1-sulfonate site; that span reads CTE. Catalysis depends on Cys-467, which acts as the Cysteine radical intermediate. Catalysis depends on Glu-469, which acts as the Proton acceptor. The Glycine radical domain maps to 706–829; sequence DGSSASHGAD…LIARTQHDAM (124 aa). Position 804 is a glycine radical (Gly-804).

The protein belongs to the glycyl radical enzyme (GRE) family. As to quaternary structure, homodimer. In terms of processing, requires the activating protein IslB to generate the key active site glycyl radical on Gly-804 that is involved in catalysis.

The enzyme catalyses 2-hydroxyethane-1-sulfonate = acetaldehyde + sulfite + H(+). It participates in organosulfur degradation; alkanesulfonate degradation. Functionally, involved in an anaerobic respiration pathway that converts the sulfonate isethionate (2-hydroxyethanesulfonate) to ammonia, acetate and sulfide. Catalyzes the radical-mediated C-S bond cleavage of isethionate (2-hydroxyethanesulfonate) to form sulfite and acetaldehyde. The polypeptide is Isethionate sulfite-lyase (Oleidesulfovibrio alaskensis (strain ATCC BAA-1058 / DSM 17464 / G20) (Desulfovibrio alaskensis)).